The following is a 190-amino-acid chain: MGDSDRDSGGGQNGNNQNGQSSLSPREQDRFLPIANVSRIMKKALPANAKISKDAKETMQECVSEFISFVTGEASDKCQKEKRKTINGDDLLWAMTTLGFEDYVEPLKVYLQRFREIEGERTGLGRPQTGGEVGEHQRDAVGDGGGFYGGGGGMQYHQHHQFLHQQNHMYGATGGGSDSGGGAASGRTRT.

The interval 1 to 30 is disordered; that stretch reads MGDSDRDSGGGQNGNNQNGQSSLSPREQDR. A DNA-binding region spans residues 32-38; the sequence is LPIANVS. Residues 59-70 form a subunit association domain (SAD) region; sequence MQECVSEFISFV. A disordered region spans residues 168 to 190; it reads HMYGATGGGSDSGGGAASGRTRT. Gly residues predominate over residues 172–184; that stretch reads ATGGGSDSGGGAA.

This sequence belongs to the NFYB/HAP3 subunit family. As to quaternary structure, heterotrimeric transcription factor composed of three components, NF-YA, NF-YB and NF-YC. NF-YB and NF-YC must interact and dimerize for NF-YA association and DNA binding. Binds directly with DPB3-1. As to expression, ubiquitous. Predominantly expressed in flowers and siliques.

Its subcellular location is the nucleus. Component of the NF-Y/HAP transcription factor complex. The NF-Y complex stimulates the transcription of various genes by recognizing and binding to a CCAAT motif in promoters. This Arabidopsis thaliana (Mouse-ear cress) protein is Nuclear transcription factor Y subunit B-2.